We begin with the raw amino-acid sequence, 500 residues long: Probable cytosol aminopeptidase (500 aa).

Mn(2+)-binding residues include lysine 264 and aspartate 269. Residue lysine 276 is part of the active site. Mn(2+) is bound by residues aspartate 287, aspartate 346, and glutamate 348. Arginine 350 is a catalytic residue.

Belongs to the peptidase M17 family. Requires Mn(2+) as cofactor.

It is found in the cytoplasm. The catalysed reaction is Release of an N-terminal amino acid, Xaa-|-Yaa-, in which Xaa is preferably Leu, but may be other amino acids including Pro although not Arg or Lys, and Yaa may be Pro. Amino acid amides and methyl esters are also readily hydrolyzed, but rates on arylamides are exceedingly low.. It catalyses the reaction Release of an N-terminal amino acid, preferentially leucine, but not glutamic or aspartic acids.. In terms of biological role, presumably involved in the processing and regular turnover of intracellular proteins. Catalyzes the removal of unsubstituted N-terminal amino acids from various peptides. The protein is Probable cytosol aminopeptidase of Rickettsia canadensis (strain McKiel).